Consider the following 458-residue polypeptide: Riboflavin transporter 2 (458 aa).

Transmembrane regions (helical) follow at residues 11–31 (LFGMGSWVAINGIWVELPLIV), 38–58 (WYLPSYLTVLIQMANVGPLFV), 73–93 (PVIYSIVGLGVVATFLLAFFW), 97–117 (VPLAGATHSVPLLVLCFLLSV), and 146–166 (GVSGLVPAVVALVQGVGVVHC). Asn168, Asn176, Asn182, and Asn199 each carry an N-linked (GlcNAc...) asparagine glycan. The chain crosses the membrane as a helical span at residues 204–224 (VFFLFLSAMMVVCLAAFLLLN). The interval 249–274 (DQALSLSHRPQEEKPMISSPDSHRRA) is disordered. 5 helical membrane passes run 279–299 (FGTGFYSGPELAFIFVVLAWV), 325–345 (LAATMAAVANPVACFIAMFLP), 349–369 (LVLIGLLTIVGTGFGTYIMAM), 388–408 (IVIAWVLFVLTLSYVKVIIGV), and 417–437 (ALVWCGAVVQLGSMLGALSMF).

Belongs to the riboflavin transporter family.

It is found in the cell membrane. It carries out the reaction riboflavin(in) = riboflavin(out). In terms of biological role, plasma membrane transporter mediating the uptake by cells of the water soluble vitamin B2/riboflavin that plays a key role in biochemical oxidation-reduction reactions of the carbohydrate, lipid, and amino acid metabolism. This chain is Riboflavin transporter 2 (rft2), found in Salmo salar (Atlantic salmon).